The following is a 203-amino-acid chain: Abscisic acid receptor PYL5 (203 aa).

Positions 1 to 18 (MRSPVQLQHGSDATNGFH) are enriched in polar residues. Residues 1 to 29 (MRSPVQLQHGSDATNGFHTLQPHDQTDGP) are disordered. Residues 51–201 (HDVGPDQCCS…NLQSLARSTN (151 aa)) form an START-like region. Residues K87, 117–122 (AVSSTE), 144–150 (RLKNYRS), and E166 contribute to the abscisate site. A Gate loop motif is present at residues 113 to 117 (SGLPA). The Latch loop signature appears at 143–145 (HRL).

This sequence belongs to the PYR/PYL/RCAR abscisic acid intracellular receptor family. Monomer. Homodimer. Binds ABA on one subunit only. Binds to CARs protein in an ABA-independent manner, both at the plasma membrane and in the nucleus. Binds both (-)-ABA and (+)-ABA. Interacts with HAB1, ABI1 and ABI2, and possibly with other PP2Cs.

The protein resides in the cytoplasm. It localises to the nucleus. It is found in the cell membrane. Receptor for abscisic acid (ABA) required for ABA-mediated responses such as stomatal closure and germination inhibition. Inhibits the activity of group-A protein phosphatases type 2C (PP2Cs) in an ABA-independent manner but more efficiently when activated by ABA. Confers enhanced sensitivity to ABA. Can be activated by both (-)-ABA and (+)-ABA. This Arabidopsis thaliana (Mouse-ear cress) protein is Abscisic acid receptor PYL5 (PYL5).